Here is a 538-residue protein sequence, read N- to C-terminus: Cytochrome c-552 (538 aa).

The signal sequence occupies residues 1 to 55 (MKIYLRFVWILIIILNFLLNLFITTNGVIIVNAFKKSLIVAASFASLSLFNSATA). His-133 is a binding site for heme c. Heme contacts are provided by Cys-161, Cys-164, and Lys-165. Residues Cys-199, Cys-202, His-203, Cys-264, Cys-267, and His-268 each coordinate heme c. Positions 270, 271, 316, and 318 each coordinate Ca(2+). Tyr-271 lines the substrate pocket. His-319 provides a ligand contact to substrate. Residues His-330, Cys-337, Cys-340, His-341, His-356, Cys-369, Cys-372, His-373, and His-448 each coordinate heme c.

It belongs to the cytochrome c-552 family. It depends on Ca(2+) as a cofactor. Requires heme c as cofactor.

It is found in the periplasm. It carries out the reaction 6 Fe(III)-[cytochrome c] + NH4(+) + 2 H2O = 6 Fe(II)-[cytochrome c] + nitrite + 8 H(+). It participates in nitrogen metabolism; nitrate reduction (assimilation). In terms of biological role, catalyzes the reduction of nitrite to ammonia, consuming six electrons in the process. This is Cytochrome c-552 from Haemophilus influenzae (strain 86-028NP).